Consider the following 355-residue polypeptide: UDP-3-O-acylglucosamine N-acyltransferase (355 aa).

Histidine 258 acts as the Proton acceptor in catalysis.

The protein belongs to the transferase hexapeptide repeat family. LpxD subfamily. Homotrimer.

The catalysed reaction is a UDP-3-O-[(3R)-3-hydroxyacyl]-alpha-D-glucosamine + a (3R)-hydroxyacyl-[ACP] = a UDP-2-N,3-O-bis[(3R)-3-hydroxyacyl]-alpha-D-glucosamine + holo-[ACP] + H(+). The protein operates within bacterial outer membrane biogenesis; LPS lipid A biosynthesis. In terms of biological role, catalyzes the N-acylation of UDP-3-O-acylglucosamine using 3-hydroxyacyl-ACP as the acyl donor. Is involved in the biosynthesis of lipid A, a phosphorylated glycolipid that anchors the lipopolysaccharide to the outer membrane of the cell. This chain is UDP-3-O-acylglucosamine N-acyltransferase, found in Bradyrhizobium sp. (strain ORS 278).